Consider the following 392-residue polypeptide: Tyrosine--tRNA ligase (392 aa).

Positions 39–48 (PTAPDIHIGH) match the 'HIGH' region motif. The 'KMSKS' region motif lies at 223 to 227 (KMSKS). Lys-226 contributes to the ATP binding site. Residues 331 to 391 (IGIAQLLKQA…GKRRFARVVL (61 aa)) form the S4 RNA-binding domain.

It belongs to the class-I aminoacyl-tRNA synthetase family. TyrS type 2 subfamily. Homodimer.

It localises to the cytoplasm. The catalysed reaction is tRNA(Tyr) + L-tyrosine + ATP = L-tyrosyl-tRNA(Tyr) + AMP + diphosphate + H(+). In terms of biological role, catalyzes the attachment of tyrosine to tRNA(Tyr) in a two-step reaction: tyrosine is first activated by ATP to form Tyr-AMP and then transferred to the acceptor end of tRNA(Tyr). The sequence is that of Tyrosine--tRNA ligase from Ralstonia nicotianae (strain ATCC BAA-1114 / GMI1000) (Ralstonia solanacearum).